The primary structure comprises 106 residues: Large ribosomal subunit protein uL24 (106 aa).

It belongs to the universal ribosomal protein uL24 family. As to quaternary structure, part of the 50S ribosomal subunit.

Functionally, one of two assembly initiator proteins, it binds directly to the 5'-end of the 23S rRNA, where it nucleates assembly of the 50S subunit. In terms of biological role, one of the proteins that surrounds the polypeptide exit tunnel on the outside of the subunit. This Desulforudis audaxviator (strain MP104C) protein is Large ribosomal subunit protein uL24.